A 121-amino-acid polypeptide reads, in one-letter code: Flagellar protein FliT (121 aa).

The tract at residues 1–50 (MNNAPHLYFAWQQLVEKSQLMLRLATEEQWDELITSEMAYVNAVQEIAHL) is required for homodimerization. Residues 60–98 (MQEQLRPMLRLILDNESKVKQLLQIRMDELAKLVGQSSV) are fliD binding.

Belongs to the FliT family. In terms of assembly, homodimer. Interacts with FliD and FlhC.

It is found in the cytoplasm. It localises to the cytosol. Functionally, dual-function protein that regulates the transcription of class 2 flagellar operons and that also acts as an export chaperone for the filament-capping protein FliD. As a transcriptional regulator, acts as an anti-FlhDC factor; it directly binds FlhC, thus inhibiting the binding of the FlhC/FlhD complex to class 2 promoters, resulting in decreased expression of class 2 flagellar operons. As a chaperone, effects FliD transition to the membrane by preventing its premature polymerization, and by directing it to the export apparatus. The polypeptide is Flagellar protein FliT (Escherichia coli (strain 55989 / EAEC)).